Here is a 1077-residue protein sequence, read N- to C-terminus: Hemoglobin and hemoglobin-haptoglobin-binding protein A (1077 aa).

Positions 1-24 (MTNFRLNVLAYSVMLGLTASVAYA) are cleaved as a signal peptide. Positions 25–72 (EPTNQPTNQPTNQPTNQPTNQPTNQPTNQPTNQPTNQPTNQPTNQNSN) are disordered. 11 repeat units span residues 26 to 29 (PTNQ), 30 to 33 (PTNQ), 34 to 37 (PTNQ), 38 to 41 (PTNQ), 42 to 45 (PTNQ), 46 to 49 (PTNQ), 50 to 53 (PTNQ), 54 to 57 (PTNQ), 58 to 61 (PTNQ), 62 to 65 (PTNQ), and 66 to 69 (PTNQ). The 11 X 4 AA tandem repeats of P-T-N-Q stretch occupies residues 26–69 (PTNQPTNQPTNQPTNQPTNQPTNQPTNQPTNQPTNQPTNQPTNQ). Residues 26–70 (PTNQPTNQPTNQPTNQPTNQPTNQPTNQPTNQPTNQPTNQPTNQN) are compositionally biased toward low complexity. A TonB box motif is present at residues 78-85 (EQINVSGS). In terms of domain architecture, TBDR plug spans 89-216 (TDTKAPPKIA…LGGSVSLDTK (128 aa)). Positions 224–1077 (NKNYYASYKR…NYRMSVQFEF (854 aa)) constitute a TBDR beta-barrel domain. The TonB C-terminal box signature appears at 1060 to 1077 (NRFYAPERNYRMSVQFEF).

Belongs to the TonB-dependent receptor family. Hemoglobin/haptoglobin binding protein subfamily.

Its subcellular location is the cell outer membrane. In terms of biological role, acts as a receptor for hemoglobin or the hemoglobin/haptoglobin complex of the human host and is required for heme uptake. The protein is Hemoglobin and hemoglobin-haptoglobin-binding protein A (hgpA) of Haemophilus influenzae.